Here is a 430-residue protein sequence, read N- to C-terminus: Histidine--tRNA ligase (430 aa).

The protein belongs to the class-II aminoacyl-tRNA synthetase family. As to quaternary structure, homodimer.

It localises to the cytoplasm. It catalyses the reaction tRNA(His) + L-histidine + ATP = L-histidyl-tRNA(His) + AMP + diphosphate + H(+). This chain is Histidine--tRNA ligase, found in Anaplasma marginale (strain St. Maries).